The sequence spans 110 residues: Small ribosomal subunit protein eS25 (110 aa).

The disordered stretch occupies residues 1 to 39 (MPPKAAGGKSKQIQASKAAAKGSSGGAGRKKWSKGRSRE).

This sequence belongs to the eukaryotic ribosomal protein eS25 family.

In Dictyostelium discoideum (Social amoeba), this protein is Small ribosomal subunit protein eS25 (rps25).